Reading from the N-terminus, the 1104-residue chain is Valine--tRNA ligase, mitochondrial (1104 aa).

The N-terminal 47 residues, 1–47, are a transit peptide targeting the mitochondrion; sequence MNKWLNTLSKTFTFRLLNCHYRRSLPLCQNFSLKKSLTHNQVRFFKM. The residue at position 73 (Ser-73) is a Phosphoserine. The segment at 99 to 119 is disordered; it reads KKNAAATTGASQKKPKKKKEV. The short motif at 190-200 is the 'HIGH' region element; the sequence is PNVTGALHIGH. Residues Ser-294 and Ser-332 each carry the phosphoserine modification. Residues 703 to 707 carry the 'KMSKS' region motif; the sequence is KMSKS. Lys-706 is a binding site for ATP. Ser-707 carries the post-translational modification Phosphoserine. At Thr-1003 the chain carries Phosphothreonine.

Belongs to the class-I aminoacyl-tRNA synthetase family.

The protein resides in the cytoplasm. Its subcellular location is the mitochondrion. The enzyme catalyses tRNA(Val) + L-valine + ATP = L-valyl-tRNA(Val) + AMP + diphosphate. In Saccharomyces cerevisiae (strain ATCC 204508 / S288c) (Baker's yeast), this protein is Valine--tRNA ligase, mitochondrial (VAS1).